Consider the following 188-residue polypeptide: ATP synthase subunit b (188 aa).

A helical transmembrane segment spans residues V19–F39.

The protein belongs to the ATPase B chain family. In terms of assembly, F-type ATPases have 2 components, F(1) - the catalytic core - and F(0) - the membrane proton channel. F(1) has five subunits: alpha(3), beta(3), gamma(1), delta(1), epsilon(1). F(0) has three main subunits: a(1), b(2) and c(10-14). The alpha and beta chains form an alternating ring which encloses part of the gamma chain. F(1) is attached to F(0) by a central stalk formed by the gamma and epsilon chains, while a peripheral stalk is formed by the delta and b chains.

It localises to the cell membrane. Functionally, f(1)F(0) ATP synthase produces ATP from ADP in the presence of a proton or sodium gradient. F-type ATPases consist of two structural domains, F(1) containing the extramembraneous catalytic core and F(0) containing the membrane proton channel, linked together by a central stalk and a peripheral stalk. During catalysis, ATP synthesis in the catalytic domain of F(1) is coupled via a rotary mechanism of the central stalk subunits to proton translocation. In terms of biological role, component of the F(0) channel, it forms part of the peripheral stalk, linking F(1) to F(0). The chain is ATP synthase subunit b from Mesomycoplasma hyopneumoniae (strain 7448) (Mycoplasma hyopneumoniae).